We begin with the raw amino-acid sequence, 64 residues long: Conotoxin Im11.4 (64 aa).

Residues 1–26 (MMFRLTSVSCILLVIAFLNLVGLTNA) form the signal peptide. Cystine bridges form between Cys27/Cys41, Cys34/Cys46, Cys40/Cys50, and Cys45/Cys54. His57 bears the Histidine amide mark. Residues 61 to 64 (ATFQ) constitute a propeptide that is removed on maturation.

The protein belongs to the conotoxin I2 superfamily. Expressed by the venom duct.

Its subcellular location is the secreted. The chain is Conotoxin Im11.4 from Conus imperialis (Imperial cone).